Reading from the N-terminus, the 353-residue chain is Phospho-N-acetylmuramoyl-pentapeptide-transferase (353 aa).

The next 10 helical transmembrane spans lie at 24-44 (LGFF…ILWA), 66-86 (TPTM…VLCA), 88-108 (LGNL…FVGF), 129-149 (FGML…KGLD), 160-180 (PLFE…FLST), 192-212 (GLAS…VYVA), 229-249 (VGEL…FLWY), 256-276 (VFMG…NAIV), 281-301 (ILLV…ILQV), and 330-350 (KVIV…LLSL).

Belongs to the glycosyltransferase 4 family. MraY subfamily. It depends on Mg(2+) as a cofactor.

Its subcellular location is the cell inner membrane. It catalyses the reaction UDP-N-acetyl-alpha-D-muramoyl-L-alanyl-gamma-D-glutamyl-meso-2,6-diaminopimeloyl-D-alanyl-D-alanine + di-trans,octa-cis-undecaprenyl phosphate = di-trans,octa-cis-undecaprenyl diphospho-N-acetyl-alpha-D-muramoyl-L-alanyl-D-glutamyl-meso-2,6-diaminopimeloyl-D-alanyl-D-alanine + UMP. The protein operates within cell wall biogenesis; peptidoglycan biosynthesis. Functionally, catalyzes the initial step of the lipid cycle reactions in the biosynthesis of the cell wall peptidoglycan: transfers peptidoglycan precursor phospho-MurNAc-pentapeptide from UDP-MurNAc-pentapeptide onto the lipid carrier undecaprenyl phosphate, yielding undecaprenyl-pyrophosphoryl-MurNAc-pentapeptide, known as lipid I. In Helicobacter pylori (strain HPAG1), this protein is Phospho-N-acetylmuramoyl-pentapeptide-transferase.